Reading from the N-terminus, the 129-residue chain is Small ribosomal subunit protein uS11 (129 aa).

The protein belongs to the universal ribosomal protein uS11 family. As to quaternary structure, part of the 30S ribosomal subunit. Interacts with proteins S7 and S18. Binds to IF-3.

Located on the platform of the 30S subunit, it bridges several disparate RNA helices of the 16S rRNA. Forms part of the Shine-Dalgarno cleft in the 70S ribosome. The polypeptide is Small ribosomal subunit protein uS11 (Bacillus cereus (strain ATCC 14579 / DSM 31 / CCUG 7414 / JCM 2152 / NBRC 15305 / NCIMB 9373 / NCTC 2599 / NRRL B-3711)).